The chain runs to 175 residues: Large ribosomal subunit protein uL6 (175 aa).

The protein belongs to the universal ribosomal protein uL6 family. As to quaternary structure, part of the 50S ribosomal subunit.

Functionally, this protein binds to the 23S rRNA, and is important in its secondary structure. It is located near the subunit interface in the base of the L7/L12 stalk, and near the tRNA binding site of the peptidyltransferase center. This Xanthomonas campestris pv. campestris (strain 8004) protein is Large ribosomal subunit protein uL6.